We begin with the raw amino-acid sequence, 369 residues long: Septin-5 (369 aa).

The residue at position 13 (threonine 13) is a Phosphothreonine. One can recognise a Septin-type G domain in the interval 41–314 (KGFDFTLMVA…ENYRAHCIQQ (274 aa)). A G1 motif region spans residues 51–58 (GESGLGKS). GTP is bound by residues 51–58 (GESGLGKS), threonine 85, and glycine 111. The interval 108 to 111 (DTPG) is G3 motif. Residue arginine 168 is modified to Omega-N-methylarginine. The interval 189–192 (AKAD) is G4 motif. 190–198 (KADCLVPSE) serves as a coordination point for GTP. Serine 225 carries the phosphoserine modification. Residues glycine 248 and arginine 263 each contribute to the GTP site. A Phosphoserine modification is found at serine 327. Threonine 336 bears the Phosphothreonine mark. Residues 338–369 (DAETEKLIRMKDEELRRMQEMLQRMKQQMQDQ) adopt a coiled-coil conformation.

This sequence belongs to the TRAFAC class TrmE-Era-EngA-EngB-Septin-like GTPase superfamily. Septin GTPase family. As to quaternary structure, septins polymerize into heterooligomeric protein complexes that form filaments, and can associate with cellular membranes, actin filaments and microtubules. GTPase activity is required for filament formation. Interacts with SEPTIN2 and SEPTIN5. In platelets, associated with a complex containing STX4. Interacts with PRKN; this interaction leads to SEPTIN5 ubiquitination and degradation. Interacts with DYRK1A. Interacts with STX1A; in the cerebellar cortex. Phosphorylated by DYRK1A. In platelets, phosphorylated in response to thrombin, phorbol-12-myristate-13-acetate and collagen. Expressed at high levels in the CNS, as well as in heart and platelets (at protein level).

The protein localises to the cytoplasm. The protein resides in the cytoskeleton. In terms of biological role, filament-forming cytoskeletal GTPase. May play a role in cytokinesis (Potential). May play a role in platelet secretion. This chain is Septin-5, found in Homo sapiens (Human).